The primary structure comprises 268 residues: Tubulin-specific chaperone C (268 aa).

The 158-residue stretch at 98–255 folds into the C-CAP/cofactor C-like domain; that stretch reads PAYTTTLKKH…SAFAFEDFDI (158 aa).

Its subcellular location is the cytoplasm. It localises to the cytoskeleton. Its function is as follows. Tubulin-folding protein; involved in the early step of the tubulin folding pathway. The sequence is that of Tubulin-specific chaperone C (CIN2) from Saccharomyces cerevisiae (strain ATCC 204508 / S288c) (Baker's yeast).